We begin with the raw amino-acid sequence, 245 residues long: 1-(5-phosphoribosyl)-5-[(5-phosphoribosylamino)methylideneamino] imidazole-4-carboxamide isomerase (245 aa).

Catalysis depends on Asp7, which acts as the Proton acceptor. The active-site Proton donor is Asp129.

The protein belongs to the HisA/HisF family.

The protein resides in the cytoplasm. The enzyme catalyses 1-(5-phospho-beta-D-ribosyl)-5-[(5-phospho-beta-D-ribosylamino)methylideneamino]imidazole-4-carboxamide = 5-[(5-phospho-1-deoxy-D-ribulos-1-ylimino)methylamino]-1-(5-phospho-beta-D-ribosyl)imidazole-4-carboxamide. Its pathway is amino-acid biosynthesis; L-histidine biosynthesis; L-histidine from 5-phospho-alpha-D-ribose 1-diphosphate: step 4/9. The protein is 1-(5-phosphoribosyl)-5-[(5-phosphoribosylamino)methylideneamino] imidazole-4-carboxamide isomerase of Salmonella enteritidis PT4 (strain P125109).